The chain runs to 153 residues: Protein Smg homolog (153 aa).

The protein belongs to the Smg family.

In Neisseria meningitidis serogroup B (strain ATCC BAA-335 / MC58), this protein is Protein Smg homolog.